Here is a 335-residue protein sequence, read N- to C-terminus: Ketol-acid reductoisomerase (NAD(P)(+)) (335 aa).

The 181-residue stretch at 5-185 folds into the KARI N-terminal Rossmann domain; it reads AKIYTDKDTT…GGTRAGAIET (181 aa). NADP(+)-binding positions include 28–31, R52, S56, and 86–89; these read YGSQ and DMAQ. H111 is an active-site residue. G137 contacts NADP(+). In terms of domain architecture, KARI C-terminal knotted spans 186-331; sequence TFKEETETDL…RRLKEIIERG (146 aa). Positions 194, 198, 230, and 234 each coordinate Mg(2+). Position 255 (S255) interacts with substrate. A disordered region spans residues 301 to 335; that stretch reads GSPTLSKGLEEMDKSLEEQTGRRLKEIIERGRPKS. Residues 308–335 show a composition bias toward basic and acidic residues; sequence GLEEMDKSLEEQTGRRLKEIIERGRPKS.

It belongs to the ketol-acid reductoisomerase family. Mg(2+) serves as cofactor.

The enzyme catalyses (2R)-2,3-dihydroxy-3-methylbutanoate + NAD(+) = (2S)-2-acetolactate + NADH + H(+). It catalyses the reaction (2R)-2,3-dihydroxy-3-methylbutanoate + NADP(+) = (2S)-2-acetolactate + NADPH + H(+). It participates in amino-acid biosynthesis; L-isoleucine biosynthesis; L-isoleucine from 2-oxobutanoate: step 2/4. The protein operates within amino-acid biosynthesis; L-valine biosynthesis; L-valine from pyruvate: step 2/4. In terms of biological role, involved in the biosynthesis of branched-chain amino acids (BCAA). Catalyzes an alkyl-migration followed by a ketol-acid reduction of (S)-2-acetolactate (S2AL) to yield (R)-2,3-dihydroxy-isovalerate. In the isomerase reaction, S2AL is rearranged via a Mg-dependent methyl migration to produce 3-hydroxy-3-methyl-2-ketobutyrate (HMKB). In the reductase reaction, this 2-ketoacid undergoes a metal-dependent reduction by NADPH or NADH to yield (R)-2,3-dihydroxy-isovalerate. The chain is Ketol-acid reductoisomerase (NAD(P)(+)) from Metallosphaera sedula (strain ATCC 51363 / DSM 5348 / JCM 9185 / NBRC 15509 / TH2).